A 410-amino-acid polypeptide reads, in one-letter code: LL-diaminopimelate aminotransferase (410 aa).

Residues Tyr15 and Gly42 each contribute to the substrate site. Residues Tyr72, 108-109 (SK), Tyr132, Asn187, Tyr218, and 246-248 (SFS) contribute to the pyridoxal 5'-phosphate site. Substrate-binding residues include Lys109, Tyr132, and Asn187. Position 249 is an N6-(pyridoxal phosphate)lysine (Lys249). Pyridoxal 5'-phosphate contacts are provided by Arg257 and Asn292. Residues Asn292 and Arg388 each coordinate substrate.

Belongs to the class-I pyridoxal-phosphate-dependent aminotransferase family. LL-diaminopimelate aminotransferase subfamily. In terms of assembly, homodimer. It depends on pyridoxal 5'-phosphate as a cofactor.

It catalyses the reaction (2S,6S)-2,6-diaminopimelate + 2-oxoglutarate = (S)-2,3,4,5-tetrahydrodipicolinate + L-glutamate + H2O + H(+). The protein operates within amino-acid biosynthesis; L-lysine biosynthesis via DAP pathway; LL-2,6-diaminopimelate from (S)-tetrahydrodipicolinate (aminotransferase route): step 1/1. In terms of biological role, involved in the synthesis of meso-diaminopimelate (m-DAP or DL-DAP), required for both lysine and peptidoglycan biosynthesis. Catalyzes the direct conversion of tetrahydrodipicolinate to LL-diaminopimelate. The protein is LL-diaminopimelate aminotransferase of Geobacter sulfurreducens (strain ATCC 51573 / DSM 12127 / PCA).